Consider the following 212-residue polypeptide: Methylthioribulose-1-phosphate dehydratase (212 aa).

Zn(2+)-binding residues include histidine 103 and histidine 105.

The protein belongs to the aldolase class II family. MtnB subfamily. Zn(2+) is required as a cofactor.

It carries out the reaction 5-(methylsulfanyl)-D-ribulose 1-phosphate = 5-methylsulfanyl-2,3-dioxopentyl phosphate + H2O. The protein operates within amino-acid biosynthesis; L-methionine biosynthesis via salvage pathway; L-methionine from S-methyl-5-thio-alpha-D-ribose 1-phosphate: step 2/6. Functionally, catalyzes the dehydration of methylthioribulose-1-phosphate (MTRu-1-P) into 2,3-diketo-5-methylthiopentyl-1-phosphate (DK-MTP-1-P). This chain is Methylthioribulose-1-phosphate dehydratase, found in Sorangium cellulosum (strain So ce56) (Polyangium cellulosum (strain So ce56)).